Here is a 75-residue protein sequence, read N- to C-terminus: Large ribosomal subunit protein bL31 (75 aa).

Residues Cys16, Cys18, Cys37, and Cys40 each coordinate Zn(2+).

It belongs to the bacterial ribosomal protein bL31 family. Type A subfamily. As to quaternary structure, part of the 50S ribosomal subunit. Requires Zn(2+) as cofactor.

In terms of biological role, binds the 23S rRNA. This is Large ribosomal subunit protein bL31 from Baumannia cicadellinicola subsp. Homalodisca coagulata.